The primary structure comprises 251 residues: Prolactin-7B1 (251 aa).

The N-terminal stretch at 1 to 29 (MHLSLTQQCLWPLQILLVSNLLLWENVAA) is a signal peptide. N-linked (GlcNAc...) asparagine glycosylation is present at asparagine 73. Cystine bridges form between cysteine 100/cysteine 216 and cysteine 233/cysteine 241.

Belongs to the somatotropin/prolactin family.

The protein resides in the secreted. The polypeptide is Prolactin-7B1 (Prl7b1) (Rattus norvegicus (Rat)).